Here is a 360-residue protein sequence, read N- to C-terminus: Dihydroorotate dehydrogenase (quinone) (360 aa).

FMN contacts are provided by residues 65–69 and Thr-89; that span reads AGLDK. Residue Lys-69 participates in substrate binding. 114–118 is a binding site for substrate; the sequence is NRLGF. Positions 147 and 180 each coordinate FMN. Asn-180 contributes to the substrate binding site. The active-site Nucleophile is Ser-183. Asn-185 provides a ligand contact to substrate. FMN-binding residues include Lys-225 and Thr-253. 254–255 provides a ligand contact to substrate; the sequence is NT. FMN-binding positions include Gly-276, Gly-305, and 326–327; that span reads YT.

It belongs to the dihydroorotate dehydrogenase family. Type 2 subfamily. As to quaternary structure, monomer. Requires FMN as cofactor.

It localises to the cell membrane. It catalyses the reaction (S)-dihydroorotate + a quinone = orotate + a quinol. It participates in pyrimidine metabolism; UMP biosynthesis via de novo pathway; orotate from (S)-dihydroorotate (quinone route): step 1/1. In terms of biological role, catalyzes the conversion of dihydroorotate to orotate with quinone as electron acceptor. In Verminephrobacter eiseniae (strain EF01-2), this protein is Dihydroorotate dehydrogenase (quinone).